The chain runs to 938 residues: MNDYKNTLNLPKTQFSMRANLSQKEPKILKNWYDNNLYKLIRQKKEGKKIFFLHDGPPYANGNIHIGHAVNKILKDIIIKSKNMSGFDAPYIPSWDCHGLPIEQKVEEQMGLKSNNIITTIFQKKCRKYAEKQIKKQKKDFIRLGVIGDWENAHLTMDFKNEANIIKTLSKIIEKKYLYKESKPIHWCLKCYSSLSDAEIEHFDKESDSIFVAIKSKNNKILKEVLNLNISSEKDIYLPIWTTTPWTLPSSQAITVNPIFEYQIIETKKYNLILAKELVKNVMKILEINHWNILSSFKGKILEGKKFLHPFLENISLPVILGDHVNLDSGTGAVHTAPDHGPDDYIVSQKYKIKTMNLVDFKGNYINNIHPKLNGVNIFQANEIIINLLIKKDCLLHHNILKHSYPHCWRHKTPVIFRATEQWFINIDQKKLRYKTLEEIKKVSWIPKWGGSRIEEMIKKRPDWCVSRQRKWGVPMCLFLHKKTGKIHPENTLLIKKIIKKVELEGIEAWWKINLKEMLGETYNMYNQTFDILDVWFESGNTHTVIKYKNKKYSKNHADMFLEGSDQHRGWFMSSLIISMLVKNQSPYSEVLTHGFVVDKNGQKMSKSIGNTISPNEVVKTLGGDILRLWVASSNYSNDISISNEILKRSSDIYRRIRNTARFMLANINDFNPQKNTVLKENMVLLDRWAISQAKIVQEEIIEFYKKYNFHAIIKRLMYFCSIEMGSFYLDIIKDRQYTLKTNSQERRSCQTAIYYIINALVRWIAPILSFTADEIWNHLPGKHAQYVFTEEWFNKLFDLDKNDLFNREFWKNLIEMKNEINKFLETEIKNKNINNSLEACLILYVTPEVKKTLNILGEELKFIFLTSKVKIELYNTAPINSTKSKKISNFKIFLKKIKEKKCPRCWHYNIFIENNNDKICTRCILNTKGNGEKRFFI.

A 'HIGH' region motif is present at residues 58 to 68; it reads PYANGNIHIGH. E563 is an L-isoleucyl-5'-AMP binding site. The 'KMSKS' region signature appears at 604-608; the sequence is KMSKS. Position 607 (K607) interacts with ATP. Residues C903, C906, C921, and C924 each contribute to the Zn(2+) site.

It belongs to the class-I aminoacyl-tRNA synthetase family. IleS type 1 subfamily. In terms of assembly, monomer. Zn(2+) serves as cofactor.

Its subcellular location is the cytoplasm. The catalysed reaction is tRNA(Ile) + L-isoleucine + ATP = L-isoleucyl-tRNA(Ile) + AMP + diphosphate. Functionally, catalyzes the attachment of isoleucine to tRNA(Ile). As IleRS can inadvertently accommodate and process structurally similar amino acids such as valine, to avoid such errors it has two additional distinct tRNA(Ile)-dependent editing activities. One activity is designated as 'pretransfer' editing and involves the hydrolysis of activated Val-AMP. The other activity is designated 'posttransfer' editing and involves deacylation of mischarged Val-tRNA(Ile). This Buchnera aphidicola subsp. Schizaphis graminum (strain Sg) protein is Isoleucine--tRNA ligase.